Here is a 159-residue protein sequence, read N- to C-terminus: Small ribosomal subunit protein uS7 (159 aa).

This sequence belongs to the universal ribosomal protein uS7 family. In terms of assembly, part of the 30S ribosomal subunit. Contacts proteins S9 and S11.

Its function is as follows. One of the primary rRNA binding proteins, it binds directly to 16S rRNA where it nucleates assembly of the head domain of the 30S subunit. Is located at the subunit interface close to the decoding center, probably blocks exit of the E-site tRNA. The protein is Small ribosomal subunit protein uS7 of Wolbachia sp. subsp. Brugia malayi (strain TRS).